Reading from the N-terminus, the 552-residue chain is B-cell linker protein (552 aa).

A disordered region spans residues 50–431; that stretch reads TGKDTWDRLK…SSISSISSTA (382 aa). The segment covering 67–76 has biased composition (basic and acidic residues); sequence PRRDYASEHA. A compositionally biased stretch (acidic residues) spans 77–93; sequence DNEEEQWSDDFDSDYEN. A phosphotyrosine; by SYK mark is found at Y91, Y103, Y115, Y194, Y205, and Y249. Residues 188 to 205 are compositionally biased toward acidic residues; that stretch reads SDDEDNYIVPVDNDDDNY. Composition is skewed to basic and acidic residues over residues 277–295, 309–322, and 368–382; these read NAEHSHMHSMTRESPKLDA, PKTDHEANNNDENH, and NEDKPTAADRRRGSS. The region spanning 442–549 is the SH2 domain; that stretch reads WYAATCDRKT…KDSTKLKYIV (108 aa).

Associates with PLCG1, VAV1 and NCK1 in a B-cell antigen receptor-dependent fashion. Interacts through its SH2 domain with CD79A. Interacts with VAV3, PLCG2 and GRB2. In terms of processing, following BCR activation, phosphorylated on tyrosine residues by SYK and LYN. When phosphorylated, serves as a scaffold to assemble downstream targets of antigen activation, including PLCG1, VAV1, GRB2 and NCK1. Phosphorylation is required for both Ca(2+) and MAPK signaling pathways. Phosphorylation of Tyr-103, Tyr-194 and Tyr-205 facilitates PLCG1 binding. Phosphorylation of Tyr-115 facilitates BTK binding. Phosphorylation of Tyr-91 facilitates VAV1 and NCK1 binding. As to expression, highly expressed in the bursa, very low expression in ovary and spleen. Expression was variable among B-cell lines. Highly expressed in immature B-cell lines such as DT40 and CL18, low expression was seen in relatively mature B-cell lines, such as 293B9 and 249L4. No expression was seen in T-cell lines.

The protein resides in the cytoplasm. Its subcellular location is the cell membrane. In terms of biological role, functions as a central linker protein, downstream of the B-cell receptor (BCR), bridging the SYK kinase to a multitude of signaling pathways and regulating biological outcomes of B-cell function and development. Plays a role in the activation of ERK/EPHB2, MAP kinase p38 and JNK. Modulates AP1 activation. Important for the activation of NF-kappa-B and NFAT. Plays an important role in BCR-mediated PLCG1 and PLCG2 activation and Ca(2+) mobilization and is required for trafficking of the BCR to late endosomes. However, does not seem to be required for pre-BCR-mediated activation of MAP kinase and phosphatidyl-inositol 3 (PI3) kinase signaling. May be required for the RAC1-JNK pathway. Plays a critical role in orchestrating the pro-B cell to pre-B cell transition. Plays a critical role in B-cell development in the bursa. Plays an important role in BCR-induced apoptosis. This is B-cell linker protein (BLNK) from Gallus gallus (Chicken).